Consider the following 343-residue polypeptide: Protein FAM50A-B (343 aa).

Disordered stretches follow at residues 1-25 (MAQY…EKQR) and 125-181 (EEDE…EEEN). Positions 125 to 142 (EEDEECEDEESEEEEEEY) are enriched in acidic residues. Positions 172–181 (PDRDREEEEN) are enriched in basic and acidic residues.

Belongs to the FAM50 family.

Its subcellular location is the nucleus. Functionally, probably involved in the regulation of pre-mRNA splicing. In Xenopus laevis (African clawed frog), this protein is Protein FAM50A-B (fam50a-b).